The sequence spans 300 residues: MTKASVAIVGSGNISTDLLYKLQRSEWLEPRWMIGIDPESEGLARARKMGLETSAEGVDWLLSQAEKPDLVFEATSAYVHREAAPRYEAAGIRAIDLTPAAVGPAVVPPANLREHLDAPNVNMITCGGQATIPIVYAVSRVVDVAYAEIVASVASLSAGPGTRANIDEFTKTTSRGIETIGGAQRGKAIIILNPADPPMIMRDTIFCAIPEDADQAAITDSIHRVVKDIQQYVPGYRLLNEPQFDKPSVVSGGYATVTTFVEVEGAGDFLPPYAGNLDIMTAAATKVGEEIAQKLLSVKA.

11–14 is a binding site for NAD(+); that stretch reads SGNI. C126 functions as the Acyl-thioester intermediate in the catalytic mechanism. NAD(+) is bound by residues 157 to 165 and N276; that span reads SAGPGTRAN.

It belongs to the acetaldehyde dehydrogenase family.

It catalyses the reaction acetaldehyde + NAD(+) + CoA = acetyl-CoA + NADH + H(+). This Rhodococcus erythropolis (strain PR4 / NBRC 100887) protein is Acetaldehyde dehydrogenase 1.